Consider the following 304-residue polypeptide: N-acetyllactosaminide alpha-2,3-sialyltransferase (304 aa).

Residues 221-225 (FPHPA), 242-243 (FE), and 262-263 (SS) each bind CMP-N-acetyl-beta-neuraminate. Catalysis depends on H223, which acts as the Proton donor.

This sequence belongs to the glycosyltransferase 52 family.

The enzyme catalyses a beta-D-galactosyl-(1-&gt;4)-N-acetyl-beta-D-glucosaminyl derivative + CMP-N-acetyl-beta-neuraminate = an N-acetyl-alpha-neuraminyl-(2-&gt;3)-beta-D-galactosyl-(1-&gt;4)-N-acetyl-beta-D-glucosaminyl derivative + CMP + H(+). It participates in bacterial outer membrane biogenesis; lipooligosaccharide biosynthesis. In terms of biological role, catalyzes the transfer of sialic acid from the substrate CMP-N-acetylneuraminate to the terminal galactose residue of the N-acetyllactosamine moiety of surface lipooligosaccharide (LOS). Thus, functions in the sialylation of LOS, which plays a role in the evasion of the host immune response. The protein is N-acetyllactosaminide alpha-2,3-sialyltransferase of Haemophilus influenzae (strain ATCC 51907 / DSM 11121 / KW20 / Rd).